A 202-amino-acid polypeptide reads, in one-letter code: Urease accessory protein UreG (202 aa).

11–18 (GPVGSGKT) serves as a coordination point for GTP.

The protein belongs to the SIMIBI class G3E GTPase family. UreG subfamily. In terms of assembly, homodimer. UreD, UreF and UreG form a complex that acts as a GTP-hydrolysis-dependent molecular chaperone, activating the urease apoprotein by helping to assemble the nickel containing metallocenter of UreC. The UreE protein probably delivers the nickel.

Its subcellular location is the cytoplasm. Functionally, facilitates the functional incorporation of the urease nickel metallocenter. This process requires GTP hydrolysis, probably effectuated by UreG. The protein is Urease accessory protein UreG of Magnetococcus marinus (strain ATCC BAA-1437 / JCM 17883 / MC-1).